Reading from the N-terminus, the 541-residue chain is Chaperonin GroEL 2 (541 aa).

Residues 29–32, 86–90, Gly413, 478–480, and Asp494 each bind ATP; these read TLGP, DGTTT, and NAA.

This sequence belongs to the chaperonin (HSP60) family. In terms of assembly, forms a cylinder of 14 subunits composed of two heptameric rings stacked back-to-back. Interacts with the co-chaperonin GroES.

It is found in the cytoplasm. The catalysed reaction is ATP + H2O + a folded polypeptide = ADP + phosphate + an unfolded polypeptide.. Its function is as follows. Together with its co-chaperonin GroES, plays an essential role in assisting protein folding. The GroEL-GroES system forms a nano-cage that allows encapsulation of the non-native substrate proteins and provides a physical environment optimized to promote and accelerate protein folding. This chain is Chaperonin GroEL 2, found in Corynebacterium jeikeium (strain K411).